Here is a 426-residue protein sequence, read N- to C-terminus: Serine--tRNA ligase (426 aa).

227-229 is an L-serine binding site; that stretch reads TSE. Residues 258-260 and valine 274 contribute to the ATP site; that span reads RKE. An L-serine-binding site is contributed by glutamate 281. 345 to 348 contributes to the ATP binding site; it reads ELTS. Residue threonine 380 participates in L-serine binding.

Belongs to the class-II aminoacyl-tRNA synthetase family. Type-1 seryl-tRNA synthetase subfamily. Homodimer. The tRNA molecule binds across the dimer.

Its subcellular location is the cytoplasm. It catalyses the reaction tRNA(Ser) + L-serine + ATP = L-seryl-tRNA(Ser) + AMP + diphosphate + H(+). The catalysed reaction is tRNA(Sec) + L-serine + ATP = L-seryl-tRNA(Sec) + AMP + diphosphate + H(+). It participates in aminoacyl-tRNA biosynthesis; selenocysteinyl-tRNA(Sec) biosynthesis; L-seryl-tRNA(Sec) from L-serine and tRNA(Sec): step 1/1. Catalyzes the attachment of serine to tRNA(Ser). Is also able to aminoacylate tRNA(Sec) with serine, to form the misacylated tRNA L-seryl-tRNA(Sec), which will be further converted into selenocysteinyl-tRNA(Sec). The chain is Serine--tRNA ligase from Clavibacter michiganensis subsp. michiganensis (strain NCPPB 382).